Consider the following 126-residue polypeptide: Fluoride-specific ion channel FluC (126 aa).

The next 4 helical transmembrane spans lie at 5–25 (IAVICLAACVGALMRWGFALW), 34–54 (WGTLAVNLIGGYCIGIALAVF), 67–87 (LVITGFLGTLTTFSSFSGEVV), and 95–115 (FGLAFGTIALHLGGSLALTWA). Na(+)-binding residues include Gly74 and Thr77.

The protein belongs to the fluoride channel Fluc/FEX (TC 1.A.43) family.

It localises to the cell inner membrane. It carries out the reaction fluoride(in) = fluoride(out). Its activity is regulated as follows. Na(+) is not transported, but it plays an essential structural role and its presence is essential for fluoride channel function. Fluoride-specific ion channel. Important for reducing fluoride concentration in the cell, thus reducing its toxicity. The polypeptide is Fluoride-specific ion channel FluC (Paracidovorax citrulli (strain AAC00-1) (Acidovorax citrulli)).